We begin with the raw amino-acid sequence, 255 residues long: Electron transfer flavoprotein subunit beta (255 aa).

At Ala-2 the chain carries N-acetylalanine. Residues Ala-9, 39–42 (NPFC), Cys-66, and 123–134 (GKQAIDDDCNQT) each bind AMP. Positions 183–205 (ADLRLNEPRYATLPNIMKAKKKK) are recognition loop. Residue Lys-200 is modified to N6,N6,N6-trimethyllysine; by ETFBKMT; alternate. At Lys-200 the chain carries N6-acetyllysine; alternate. At Lys-200 the chain carries N6-methyllysine; alternate. At Lys-203 the chain carries N6,N6,N6-trimethyllysine; by ETFBKMT. An N6-acetyllysine; alternate modification is found at Lys-210. Residue Lys-210 is modified to N6-succinyllysine; alternate. A phosphoserine mark is found at Ser-223 and Ser-226. At Lys-238 the chain carries N6-acetyllysine. At Lys-248 the chain carries N6-acetyllysine; alternate. An N6-succinyllysine; alternate modification is found at Lys-248.

Belongs to the ETF beta-subunit/FixA family. In terms of assembly, heterodimer composed of ETFA and ETFB. Identified in a complex that contains ETFA, ETFB and ETFRF1. Interacts with ACADM. In terms of processing, methylated. Trimethylation at Lys-200 and Lys-203 may negatively regulate the activity in electron transfer from acyl-CoA dehydrogenases.

It is found in the mitochondrion matrix. Its function is as follows. Heterodimeric electron transfer flavoprotein that accepts electrons from several mitochondrial dehydrogenases, including acyl-CoA dehydrogenases, glutaryl-CoA and sarcosine dehydrogenase. It transfers the electrons to the main mitochondrial respiratory chain via ETF-ubiquinone oxidoreductase. Required for normal mitochondrial fatty acid oxidation and normal amino acid metabolism. ETFB binds an AMP molecule that probably has a purely structural role. In Mus musculus (Mouse), this protein is Electron transfer flavoprotein subunit beta.